The chain runs to 70 residues: Beta-defensin 107 (70 aa).

An N-terminal signal peptide occupies residues 1 to 26 (MPGAMKIFVFILAALILLAQIFQART). Cystine bridges form between Cys41-Cys55 and Cys45-Cys64.

This sequence belongs to the beta-defensin family. In terms of tissue distribution, specifically expressed in testis.

Its subcellular location is the secreted. Has antibacterial activity. This chain is Beta-defensin 107 (DEFB107A), found in Homo sapiens (Human).